Consider the following 289-residue polypeptide: Energy-coupling factor transporter ATP-binding protein EcfA2 (289 aa).

An ABC transporter domain is found at 3-246 (IEIKDVEHRY…KDDIAALGLD (244 aa)). An ATP-binding site is contributed by 40–47 (GHTGSGKS).

This sequence belongs to the ABC transporter superfamily. Energy-coupling factor EcfA family. Forms a stable energy-coupling factor (ECF) transporter complex composed of 2 membrane-embedded substrate-binding proteins (S component), 2 ATP-binding proteins (A component) and 2 transmembrane proteins (T component).

It is found in the cell membrane. Its function is as follows. ATP-binding (A) component of a common energy-coupling factor (ECF) ABC-transporter complex. Unlike classic ABC transporters this ECF transporter provides the energy necessary to transport a number of different substrates. The sequence is that of Energy-coupling factor transporter ATP-binding protein EcfA2 from Bacillus licheniformis (strain ATCC 14580 / DSM 13 / JCM 2505 / CCUG 7422 / NBRC 12200 / NCIMB 9375 / NCTC 10341 / NRRL NRS-1264 / Gibson 46).